The sequence spans 850 residues: Protein monoglycylase TTLL8 (850 aa).

Disordered stretches follow at residues 1–29 (MEPE…QGIS) and 228–254 (RSSR…DAEN). One can recognise a TTL domain in the interval 222 to 580 (SHQSCSRSSR…DRSCDIGNFE (359 aa)). ATP is bound by residues Lys354, 360–361 (RG), 392–395 (QKYI), 405–407 (KFD), and 449–450 (CN). An a protein-binding site is contributed by Arg360. The Mg(2+) site is built by Asp527, Glu540, and Asn542. Glu540 lines the ATP pocket. A disordered region spans residues 627 to 652 (AQPLKARGPSAMPDPAQGPPSPALQR).

The cofactor is Mg(2+).

It localises to the cytoplasm. The protein localises to the cytoskeleton. Its subcellular location is the cell projection. It is found in the cilium. The protein resides in the cilium axoneme. It localises to the flagellum axoneme. It catalyses the reaction L-glutamyl-[protein] + glycine + ATP = glycyl-L-glutamyl-[protein] + ADP + phosphate + H(+). Monoglycylase which modifies both tubulin and non-tubulin proteins, adding a single glycine to the gamma-carboxyl groups of specific glutamate residues to generate monoglycine side chains within the C-terminal tail of target proteins. Not involved in elongation step of the polyglycylation reaction. Preferentially monoglycylates alpha-tubulin over beta-tubulin. Together with TTLL3, mediates microtubule glycylation of primary and motile cilia, which is essential for their stability and maintenance. Together with TTLL3, glycylates sperm flagella which regulates axonemal dynein motor activity, thereby controlling flagellar beat, directional sperm swimming and male fertility. Monoglycylates non-tubulin proteins such as ANP32A, ANP32B, SET, NCL and NAP1. The sequence is that of Protein monoglycylase TTLL8 from Homo sapiens (Human).